The sequence spans 332 residues: MQVSNFLKPRIVDVQRINDYATKVTLEPLERGFGHTLGNALRRILLSSMPGCAIIEAQIDGVLHEYTTKEGVQEDMTEILLNLKGVAVKLHGRDEVTLNLSSKGPVTVTAGDIQLEHDVEVINPEHVIAHLTKSGELNLTMKVVRGRGYQSASMRIPKEEDERSIGHLILDASFSPIRRVTYEVDSARVEQRTDLDKLIIEIETNGTIAPDEAVRKAATILQDQLTAFVELEGKIETAKEKKAAEIDPVLLQPIDDLELTVRSANCLKAENIYYIGDLIQKTEVELLKTPNLGKKSLTEIKDVLTLRGLSLGMRLENWPPAGLREEETKVTA.

Positions 1–232 (MQVSNFLKPR…DQLTAFVELE (232 aa)) are alpha N-terminal domain (alpha-NTD). The segment at 246 to 332 (IDPVLLQPID…LREEETKVTA (87 aa)) is alpha C-terminal domain (alpha-CTD).

Belongs to the RNA polymerase alpha chain family. Homodimer. The RNAP catalytic core consists of 2 alpha, 1 beta, 1 beta' and 1 omega subunit. When a sigma factor is associated with the core the holoenzyme is formed, which can initiate transcription.

It carries out the reaction RNA(n) + a ribonucleoside 5'-triphosphate = RNA(n+1) + diphosphate. Functionally, DNA-dependent RNA polymerase catalyzes the transcription of DNA into RNA using the four ribonucleoside triphosphates as substrates. The polypeptide is DNA-directed RNA polymerase subunit alpha (Nitrosococcus oceani (strain ATCC 19707 / BCRC 17464 / JCM 30415 / NCIMB 11848 / C-107)).